The primary structure comprises 85 residues: DNA-directed RNA polymerase subunit omega (85 aa).

Belongs to the RNA polymerase subunit omega family. As to quaternary structure, the RNAP catalytic core consists of 2 alpha, 1 beta, 1 beta' and 1 omega subunit. When a sigma factor is associated with the core the holoenzyme is formed, which can initiate transcription.

It catalyses the reaction RNA(n) + a ribonucleoside 5'-triphosphate = RNA(n+1) + diphosphate. Its function is as follows. Promotes RNA polymerase assembly. Latches the N- and C-terminal regions of the beta' subunit thereby facilitating its interaction with the beta and alpha subunits. This is DNA-directed RNA polymerase subunit omega from Tropheryma whipplei (strain TW08/27) (Whipple's bacillus).